Consider the following 406-residue polypeptide: ATPase ASNA1 homolog (406 aa).

Residue 21-28 (KGGVGKTT) participates in ATP binding. Aspartate 62 is an active-site residue. 2 residues coordinate ATP: glutamate 300 and asparagine 327. Residues cysteine 339 and cysteine 342 each contribute to the Zn(2+) site.

It belongs to the arsA ATPase family. In terms of assembly, homodimer.

The protein resides in the cytoplasm. The protein localises to the endoplasmic reticulum. Its function is as follows. ATPase required for the post-translational delivery of tail-anchored (TA) proteins to the endoplasmic reticulum. Recognizes and selectively binds the transmembrane domain of TA proteins in the cytosol. This complex then targets to the endoplasmic reticulum by membrane-bound receptors, where the tail-anchored protein is released for insertion. This process is regulated by ATP binding and hydrolysis. ATP binding drives the homodimer towards the closed dimer state, facilitating recognition of newly synthesized TA membrane proteins. ATP hydrolysis is required for insertion. Subsequently, the homodimer reverts towards the open dimer state, lowering its affinity for the membrane-bound receptor, and returning it to the cytosol to initiate a new round of targeting. The sequence is that of ATPase ASNA1 homolog from Leishmania braziliensis.